A 505-amino-acid chain; its full sequence is Mannosylglucosyl-3-phosphoglycerate synthase (505 aa).

As to quaternary structure, monomer in solution.

The catalysed reaction is (2R)-2-O-(alpha-D-glucopyranosyl)-3-phospho-glycerate + GDP-alpha-D-mannose = (2R)-2-O-[alpha-D-mannopyranosyl-(1-&gt;2)-alpha-D-glucopyranosyl]-3-phospho-glycerate + GDP + H(+). Not strictly dependent on divalent cations, but the presence of Mn(2+), Ca(2+), Mg(2+) or Co(2+) stimulates activity. Its function is as follows. Involved in the biosynthesis of the compatible solute mannosylglucosylglycerate through a phosphorylating pathway. Catalyzes the conversion of glucosyl-3-phosphoglycerate (GPG) to mannosylglucosyl-3-phosphoglycerate (MGPG). This Petrotoga mobilis (strain DSM 10674 / SJ95) protein is Mannosylglucosyl-3-phosphoglycerate synthase.